The sequence spans 184 residues: Putative pre-16S rRNA nuclease (184 aa).

Residues 1 to 23 form a disordered region; the sequence is MFSSQHRLLYQPSGPDLSKNLDP.

Belongs to the YqgF nuclease family.

Its subcellular location is the cytoplasm. Its function is as follows. Could be a nuclease involved in processing of the 5'-end of pre-16S rRNA. This Mycobacterium leprae (strain Br4923) protein is Putative pre-16S rRNA nuclease.